Reading from the N-terminus, the 921-residue chain is Protein translocase subunit SecA (921 aa).

ATP-binding positions include Q87, 105–109, and D516; that span reads GEGKT. Zn(2+) contacts are provided by C905, C907, C916, and H917.

It belongs to the SecA family. As to quaternary structure, monomer and homodimer. Part of the essential Sec protein translocation apparatus which comprises SecA, SecYEG and auxiliary proteins SecDF-YajC and YidC. Zn(2+) is required as a cofactor.

The protein localises to the cell inner membrane. Its subcellular location is the cytoplasm. It catalyses the reaction ATP + H2O + cellular proteinSide 1 = ADP + phosphate + cellular proteinSide 2.. Functionally, part of the Sec protein translocase complex. Interacts with the SecYEG preprotein conducting channel. Has a central role in coupling the hydrolysis of ATP to the transfer of proteins into and across the cell membrane, serving both as a receptor for the preprotein-SecB complex and as an ATP-driven molecular motor driving the stepwise translocation of polypeptide chains across the membrane. The polypeptide is Protein translocase subunit SecA (Albidiferax ferrireducens (strain ATCC BAA-621 / DSM 15236 / T118) (Rhodoferax ferrireducens)).